The chain runs to 120 residues: Large ribosomal subunit protein uL18 (120 aa).

The protein belongs to the universal ribosomal protein uL18 family. In terms of assembly, part of the 50S ribosomal subunit; part of the 5S rRNA/L5/L18/L25 subcomplex. Contacts the 5S and 23S rRNAs.

Its function is as follows. This is one of the proteins that bind and probably mediate the attachment of the 5S RNA into the large ribosomal subunit, where it forms part of the central protuberance. The chain is Large ribosomal subunit protein uL18 from Trichodesmium erythraeum (strain IMS101).